A 158-amino-acid chain; its full sequence is Endoribonuclease YbeY (158 aa).

Zn(2+) contacts are provided by histidine 118, histidine 122, and histidine 128.

This sequence belongs to the endoribonuclease YbeY family. It depends on Zn(2+) as a cofactor.

The protein localises to the cytoplasm. Single strand-specific metallo-endoribonuclease involved in late-stage 70S ribosome quality control and in maturation of the 3' terminus of the 16S rRNA. This chain is Endoribonuclease YbeY, found in Alteromonas mediterranea (strain DSM 17117 / CIP 110805 / LMG 28347 / Deep ecotype).